The primary structure comprises 131 residues: Antitoxin MqsA (131 aa).

C3, C6, C37, and C40 together coordinate Zn(2+). The region spanning 74–127 (IVKVRKKLSLTQKEASEIFGGGVNAFSRYEKGNAQPHPSTIKLLRVLDKHPELL) is the HTH cro/C1-type domain. A DNA-binding region (H-T-H motif) is located at residues 85-104 (QKEASEIFGGGVNAFSRYEK).

As to quaternary structure, homodimer. Crystallizes as a heterotetramer with MqsA, MqsR-MqsA(2)-MqsR. Purifies as a probable heterohexamer of 2 MqsR dimers and 1 MqsA dimer. Binds promoter DNA as a dimer. When the 2 dissociate the MsqR mRNA interferase becomes active. Requires Zn(2+) as cofactor. In terms of processing, degraded in the presence of oxidative stress, maybe by the Lon and/or ClpX proteases.

Functionally, antitoxin component of a type II toxin-antitoxin (TA) system. Labile antitoxin that binds to the MqsR mRNA interferase toxin and neutralizes its endoribonuclease activity. Overexpression prevents MqsR-mediated cessation of cell growth and inhibition of cell proliferation. Initially reported to act as a cotranscription factor with MqsA. Following further experiments, the MqsR-MqsA complex does not bind DNA and all reported data are actually due to a small fraction of free MqsA alone binding DNA. Addition of MqsR to a preformed MqsA-promoter DNA complex causes dissociation of the MqsA-DNA complex, probably causing derepression of MqsA-repressed transcripts. MqsA binds to 2 palindromes in the promoter region of the mqsRA operon activating its transcription. Binds to other promoters, inducing mcbR and spy and repressing cspD among others. Binds to and represses the rpoS promoter, the master stress regulator, resulting in decreased cyclic-di-GMP, reduced stress resistance, increased cell motility and decreased biofilm formation; in these experiments 5 TA systems are missing (lacks MazEF, RelEB, ChpB, YoeB-YefM, YafQ-DinJ). An earlier study showed overexpression alone increases biofilm formation, perhaps by repressing cspD; in these experiments the 5 TA systems are present. Represses the csgD promoter. In the presence of stress, when this protein is degraded, the promoters it represses are derepressed, leading to biofilm formation. This TA system mediates cell growth during bile acid deoxycholate stress by degrading mRNA for probable deoxycholate-binding protein YgiS; bile acid detergents such as deoxycholate are important for host defense against bacterial growth in the gall bladder and duodenum. The polypeptide is Antitoxin MqsA (Escherichia coli (strain K12)).